A 343-amino-acid chain; its full sequence is Phenylalanine--tRNA ligase alpha subunit (343 aa).

Residue glutamate 268 coordinates Mg(2+).

It belongs to the class-II aminoacyl-tRNA synthetase family. Phe-tRNA synthetase alpha subunit type 1 subfamily. Tetramer of two alpha and two beta subunits. It depends on Mg(2+) as a cofactor.

The protein resides in the cytoplasm. The enzyme catalyses tRNA(Phe) + L-phenylalanine + ATP = L-phenylalanyl-tRNA(Phe) + AMP + diphosphate + H(+). The chain is Phenylalanine--tRNA ligase alpha subunit from Cupriavidus taiwanensis (strain DSM 17343 / BCRC 17206 / CCUG 44338 / CIP 107171 / LMG 19424 / R1) (Ralstonia taiwanensis (strain LMG 19424)).